The sequence spans 616 residues: UvrABC system protein C (616 aa).

The region spanning Asn12–Ile97 is the GIY-YIG domain. The UVR domain occupies Thr203–Ser238.

It belongs to the UvrC family. As to quaternary structure, interacts with UvrB in an incision complex.

The protein localises to the cytoplasm. Functionally, the UvrABC repair system catalyzes the recognition and processing of DNA lesions. UvrC both incises the 5' and 3' sides of the lesion. The N-terminal half is responsible for the 3' incision and the C-terminal half is responsible for the 5' incision. The sequence is that of UvrABC system protein C from Aliarcobacter butzleri (strain RM4018) (Arcobacter butzleri).